The primary structure comprises 202 residues: Probable molybdenum cofactor guanylyltransferase (202 aa).

GTP-binding positions include 13–15, Lys25, Asp71, and Asp103; that span reads LAG. Asp103 provides a ligand contact to Mg(2+).

This sequence belongs to the MobA family. Mg(2+) serves as cofactor.

The protein localises to the cytoplasm. The enzyme catalyses Mo-molybdopterin + GTP + H(+) = Mo-molybdopterin guanine dinucleotide + diphosphate. Its function is as follows. Transfers a GMP moiety from GTP to Mo-molybdopterin (Mo-MPT) cofactor (Moco or molybdenum cofactor) to form Mo-molybdopterin guanine dinucleotide (Mo-MGD) cofactor. This Opitutus terrae (strain DSM 11246 / JCM 15787 / PB90-1) protein is Probable molybdenum cofactor guanylyltransferase.